We begin with the raw amino-acid sequence, 558 residues long: Laccase-10 (558 aa).

The signal sequence occupies residues 1-22; the sequence is MVFPIRILVLFALLAFPACVHG. Plastocyanin-like domains are found at residues 30 to 146 and 157 to 308; these read NVVT…PKLG and EEVI…YSGT. N-linked (GlcNAc...) asparagine glycosylation occurs at asparagine 76. Cu cation is bound by residues histidine 80 and histidine 82. Asparagine 112 carries N-linked (GlcNAc...) asparagine glycosylation. Residues histidine 125 and histidine 127 each coordinate Cu cation. Residues asparagine 185, asparagine 296, asparagine 323, asparagine 373, asparagine 383, asparagine 400, and asparagine 441 are each glycosylated (N-linked (GlcNAc...) asparagine). In terms of domain architecture, Plastocyanin-like 3 spans 408–542; that stretch reads DFPAKPRRVF…KMAFLVENGK (135 aa). Cu cation-binding residues include histidine 459, histidine 462, histidine 464, histidine 521, cysteine 522, histidine 523, and histidine 527. Residue asparagine 545 is glycosylated (N-linked (GlcNAc...) asparagine).

It belongs to the multicopper oxidase family. Cu cation serves as cofactor. In terms of tissue distribution, ubiquitous, with lower levels in siliques.

It is found in the secreted. Its subcellular location is the extracellular space. The protein localises to the apoplast. The enzyme catalyses 4 hydroquinone + O2 = 4 benzosemiquinone + 2 H2O. Its function is as follows. Lignin degradation and detoxification of lignin-derived products. The chain is Laccase-10 (LAC10) from Arabidopsis thaliana (Mouse-ear cress).